Consider the following 128-residue polypeptide: uncharacterized protein (128 aa).

This is an uncharacterized protein from Escherichia coli (Bacteriophage T4).